Here is a 190-residue protein sequence, read N- to C-terminus: Ganglioside GM2 activator (190 aa).

A signal peptide spans 1-23; the sequence is MQSLMQAPVLIALGLLFAAPAQA. Disulfide bonds link cysteine 36/cysteine 180, cysteine 96/cysteine 103, cysteine 109/cysteine 135, and cysteine 122/cysteine 133. Asparagine 60 carries N-linked (GlcNAc...) asparagine glycosylation.

It localises to the lysosome. It carries out the reaction cholesterol(in) = cholesterol(out). Its function is as follows. The large binding pocket can accommodate several single chain phospholipids and fatty acids, GM2A also exhibits some calcium-independent phospholipase activity. Binds gangliosides and stimulates ganglioside GM2 degradation. It stimulates only the breakdown of ganglioside GM2 and glycolipid GA2 by beta-hexosaminidase A. It extracts single GM2 molecules from membranes and presents them in soluble form to beta-hexosaminidase A for cleavage of N-acetyl-D-galactosamine and conversion to GM3. Has cholesterol transfer activity. The polypeptide is Ganglioside GM2 activator (GM2A) (Macaca fascicularis (Crab-eating macaque)).